The primary structure comprises 21 residues: FLNPFRWVINKYREWKNKKDS.

Ser-21 carries the serine amide modification.

In terms of tissue distribution, expressed by the venom gland.

Its subcellular location is the secreted. The chain is Cupiennin-6e from Cupiennius salei (American wandering spider).